The following is a 125-amino-acid chain: Large ribosomal subunit protein bL20 (125 aa).

Belongs to the bacterial ribosomal protein bL20 family.

In terms of biological role, binds directly to 23S ribosomal RNA and is necessary for the in vitro assembly process of the 50S ribosomal subunit. It is not involved in the protein synthesizing functions of that subunit. The sequence is that of Large ribosomal subunit protein bL20 from Rhodospirillum rubrum (strain ATCC 11170 / ATH 1.1.1 / DSM 467 / LMG 4362 / NCIMB 8255 / S1).